The chain runs to 841 residues: MNIKQEDDHHHSHAHGDNHCHCGHDQEKAADAIVRDPICGMTVDPQAGKPSLGHGGRIYHFCSEHCRTKFAAAPEDYLTAKDPVCGMSVDRSTARYFLKAEGEKFYFCSAACQAKFEADPAAYRDGQRPTAKPAPKGTLYTCPMHPEVVSDRPGDCPKCGMALEPMGIPPTDEGPNPELVDFVRRLWVSAILALPLLALGMGPMLGLPLREAIGEPQATFIELLLATPVVLWAALPFFRRAWASVVNRSPNMWTLIGLGVGTAYLYSVVATLAPGIFPMSFRGHGAAVPVYFEAAAVIVALVFVGQVLELKARERTGSAIRALLDLAPKTARRIDAEGNESDVPVDDINVADRLRVRPGERVPVDGSVLEGQSTVDESMISGEPLPVEKSKGDPLTGGTINKNGTFVMSAEKVGADTVLSRIVDMVAKAQRSRAPIQGAVDRVSAVFVPAVVAVALLAFLAWAAIGPEPRMANGLLAAVAVLIIACPCALGLATPMSIMIATGRGAGEGVLIKDAEALERFSKGDTLIVDKTGTLTEGKPKLTDIAAFGRVGEDRLLSLAASLERGSEHPLAEAIVSGAEERGVPFVEVTGFEAKTGKGVQGIADGTMVALGNSAMLADLGIDPAALSEKTEALRGDGKTVMFVVFDGALAGLVAVADRIKPTTAAAIQALHDSGLKIIMATGDNERTARAVAKSLGIDEVRADVLPEGKKALIDELRSKGAIIAMAGDGVNDAPALAAADVGIAMGTGADVAMESAGITLVKGDLTGIVRARRLAEATMRNIRQNLGFAFGYNALGVPVAAGVLYPILGLLLSPMIAAAAMSLSSVSVISNALRLRFAKL.

Transmembrane regions (helical) follow at residues 186-206 (LWVSAILALPLLALGMGPMLG), 218-238 (ATFIELLLATPVVLWAALPFF), 256-276 (IGLGVGTAYLYSVVATLAPGI), 285-305 (GAAVPVYFEAAAVIVALVFVG), 445-465 (AVFVPAVVAVALLAFLAWAAI), and 474-494 (GLLAAVAVLIIACPCALGLAT). Asp530 (4-aspartylphosphate intermediate) is an active-site residue. 2 consecutive transmembrane segments (helical) span residues 602–622 (GIADGTMVALGNSAMLADLGI) and 638–658 (GKTVMFVVFDGALAGLVAVAD). Residues Asp729 and Asp733 each contribute to the Mg(2+) site. Transmembrane regions (helical) follow at residues 742–762 (VGIAMGTGADVAMESAGITLV) and 800–820 (VAAGVLYPILGLLLSPMIAAA).

The protein belongs to the cation transport ATPase (P-type) (TC 3.A.3) family. Type IB subfamily.

The protein localises to the cell membrane. It carries out the reaction Cu(2+)(in) + ATP + H2O = Cu(2+)(out) + ADP + phosphate + H(+). Its function is as follows. Involved in copper efflux. The protein is Copper-transporting P-type ATPase (actP) of Rhizobium leguminosarum bv. viciae.